A 1556-amino-acid chain; its full sequence is Bromodomain adjacent to zinc finger domain protein 1A (1556 aa).

The required for interaction with the CHRAC1-POLE3 heterodimer. Required for interaction with the CHRAC1-POLE3 heterodimer stretch occupies residues Met1 to Asn128. Residues Met1–Gln133 form a required for interaction with NCOR1 region. Residues Glu22 to Asn128 form the WAC domain. Ser270 carries the phosphoserine modification. Residues Lys306–Lys397 adopt a coiled-coil conformation. Residues Pro422–Glu487 enclose the DDT domain. Residues Ile634 to Glu709 adopt a coiled-coil conformation. Over residues Glu662–Arg695 the composition is skewed to basic and acidic residues. Disordered stretches follow at residues Glu662–Lys754, Pro841–Asp877, and Phe941–Pro966. The tract at residues Ile667–Leu933 is required for interaction with SMARCA5 and formation of the CHRAC ISWI chromatin remodeling complex. Ser702 is subject to Phosphoserine. Residues Ile703 to Thr713 show a composition bias toward acidic residues. Basic and acidic residues predominate over residues Ile715 to Asp726. The span at Gln727 to Asp736 shows a compositional bias: acidic residues. Thr731 carries the post-translational modification Phosphothreonine. Composition is skewed to polar residues over residues Ser842–Asp872 and Ser951–Asp965. A Glycyl lysine isopeptide (Lys-Gly) (interchain with G-Cter in SUMO2) cross-link involves residue Lys952. Phosphoserine is present on residues Ser960 and Ser961. A PHD-type zinc finger spans residues Asn1148 to Lys1198. Disordered stretches follow at residues Arg1202 to Asn1376 and Leu1399 to Gly1431. The span at Glu1213–Val1258 shows a compositional bias: acidic residues. The span at Lys1262 to Gly1276 shows a compositional bias: basic residues. Over residues Lys1277 to Gly1312 the composition is skewed to polar residues. A phosphoserine mark is found at Ser1281, Ser1320, Ser1339, Ser1353, Ser1363, Ser1371, Ser1402, Ser1413, and Ser1417. Polar residues predominate over residues Ser1363–Phe1374. In terms of domain architecture, Bromo spans Gly1430–Leu1533. Thr1547 carries the phosphothreonine modification.

This sequence belongs to the WAL family. As to quaternary structure, component of the ACF-1 ISWI chromatin remodeling complex at least composed of SMARCA1 and BAZ1A, which regulates the spacing of histone octamers on the DNA template to facilitate access to DNA. Within the ACF-1 ISWI chromatin remodeling complex interacts with SMARCA1; the interaction is direct. Component of the ACF-5 ISWI chromatin remodeling complex (also called the ACF complex) at least composed of BAZ1A and SMARCA5/SNF2H, which regulates the spacing of histone octamers on the DNA template to facilitate access to DNA. Within the ACF-5 ISWI chromatin remodeling complex interacts with SMARCA5/SNF2H; the interaction is direct. Component of the CHRAC ISWI chromatin remodeling complex at least composed of SMARCA5/SNF2H, BAZ1A/ACF1, CHRAC1 and POLE3; the complex preferentially binds DNA through the CHRAC1-POLE3 heterodimer and possesses ATP-dependent nucleosome-remodeling activity. Within the complex interacts (via N-terminus) with POLE3-CHRAC1 heterodimer; the interaction is direct and is required for the complex to preferentially bind to DNA. Within the complex interacts with SMARCA5/SNF2H; the interaction is direct and promotes the interaction with the POLE3-CHRAC1 heterodimer. Interacts with NCOR1 (via its RD1 domain); the interaction corepresses a number of NCOR1-regulated genes. As to expression, highly expressed in testis and at low or undetectable levels in other tissues analyzed.

Its subcellular location is the nucleus. In terms of biological role, regulatory subunit of the ATP-dependent ACF-1 and ACF-5 ISWI chromatin remodeling complexes, which form ordered nucleosome arrays on chromatin and slide edge- and center-positioned histone octamers away from their original location on the DNA template to facilitate access to DNA during DNA-templated processes such as DNA replication, transcription, and repair. Both complexes regulate the spacing of nucleosomes along the chromatin and have the ability to slide mononucleosomes to the center of a DNA template in an ATP-dependent manner. The ACF-1 ISWI chromatin remodeling complex has a lower ATP hydrolysis rate than the ACF-5 ISWI chromatin remodeling complex. Has a role in sensing the length of DNA which flank nucleosomes, which modulates the nucleosome spacing activity of the ACF-5 ISWI chromatin remodeling complex. Involved in DNA replication and together with SMARCA5/SNF2H is required for replication of pericentric heterochromatin in S-phase. May have a role in nuclear receptor-mediated transcription repression. This is Bromodomain adjacent to zinc finger domain protein 1A (BAZ1A) from Homo sapiens (Human).